The following is a 130-amino-acid chain: Endoglucanase 2 (130 aa).

Active-site residues include His-47, Asp-98, and Glu-107.

It belongs to the glycosyl hydrolase 9 (cellulase E) family.

The catalysed reaction is Endohydrolysis of (1-&gt;4)-beta-D-glucosidic linkages in cellulose, lichenin and cereal beta-D-glucans.. Involved in ripening fruit process. The protein is Endoglucanase 2 (CEL2) of Persea americana (Avocado).